Consider the following 366-residue polypeptide: Phospho-N-acetylmuramoyl-pentapeptide-transferase (366 aa).

The next 10 membrane-spanning stretches (helical) occupy residues A27–L47, T71–A91, L93–F113, L134–A154, F174–G194, G205–A225, L245–P265, A268–V288, I294–V314, and Q343–L363.

It belongs to the glycosyltransferase 4 family. MraY subfamily. It depends on Mg(2+) as a cofactor.

The protein resides in the cell inner membrane. The catalysed reaction is UDP-N-acetyl-alpha-D-muramoyl-L-alanyl-gamma-D-glutamyl-meso-2,6-diaminopimeloyl-D-alanyl-D-alanine + di-trans,octa-cis-undecaprenyl phosphate = di-trans,octa-cis-undecaprenyl diphospho-N-acetyl-alpha-D-muramoyl-L-alanyl-D-glutamyl-meso-2,6-diaminopimeloyl-D-alanyl-D-alanine + UMP. It participates in cell wall biogenesis; peptidoglycan biosynthesis. In terms of biological role, catalyzes the initial step of the lipid cycle reactions in the biosynthesis of the cell wall peptidoglycan: transfers peptidoglycan precursor phospho-MurNAc-pentapeptide from UDP-MurNAc-pentapeptide onto the lipid carrier undecaprenyl phosphate, yielding undecaprenyl-pyrophosphoryl-MurNAc-pentapeptide, known as lipid I. This Rhizobium etli (strain CIAT 652) protein is Phospho-N-acetylmuramoyl-pentapeptide-transferase.